The following is a 395-amino-acid chain: uncharacterized protein (395 aa).

The segment covering 286-306 has biased composition (low complexity); it reads SSNKSSESTMTSPLDSASSLH. A disordered region spans residues 286–395; sequence SSNKSSESTM…RNDDSGLESV (110 aa). A compositionally biased stretch (pro residues) spans 350 to 362; sequence RPPPPSVHPPIFP. Residues 364–385 show a composition bias toward polar residues; sequence QTQLFHPPTYSTQRHVTSPNSS.

This is an uncharacterized protein from Caenorhabditis elegans.